A 245-amino-acid polypeptide reads, in one-letter code: 1-(5-phosphoribosyl)-5-[(5-phosphoribosylamino)methylideneamino] imidazole-4-carboxamide isomerase (245 aa).

Residue aspartate 7 is the Proton acceptor of the active site. Residue aspartate 129 is the Proton donor of the active site.

The protein belongs to the HisA/HisF family.

Its subcellular location is the cytoplasm. The enzyme catalyses 1-(5-phospho-beta-D-ribosyl)-5-[(5-phospho-beta-D-ribosylamino)methylideneamino]imidazole-4-carboxamide = 5-[(5-phospho-1-deoxy-D-ribulos-1-ylimino)methylamino]-1-(5-phospho-beta-D-ribosyl)imidazole-4-carboxamide. The protein operates within amino-acid biosynthesis; L-histidine biosynthesis; L-histidine from 5-phospho-alpha-D-ribose 1-diphosphate: step 4/9. The protein is 1-(5-phosphoribosyl)-5-[(5-phosphoribosylamino)methylideneamino] imidazole-4-carboxamide isomerase of Salmonella arizonae (strain ATCC BAA-731 / CDC346-86 / RSK2980).